The following is a 738-amino-acid chain: Alanine--tRNA ligase (738 aa).

The Zn(2+) site is built by histidine 564, histidine 568, cysteine 666, and histidine 670.

This sequence belongs to the class-II aminoacyl-tRNA synthetase family. In terms of assembly, homotetramer. It depends on Zn(2+) as a cofactor.

The protein resides in the cytoplasm. The catalysed reaction is tRNA(Ala) + L-alanine + ATP = L-alanyl-tRNA(Ala) + AMP + diphosphate. In terms of biological role, catalyzes the attachment of alanine to tRNA(Ala) in a two-step reaction: alanine is first activated by ATP to form Ala-AMP and then transferred to the acceptor end of tRNA(Ala). Also edits incorrectly charged Ser-tRNA(Ala) and Gly-tRNA(Ala) via its editing domain. The protein is Alanine--tRNA ligase (alaS) of Yersinia pestis bv. Antiqua (strain Antiqua).